Consider the following 194-residue polypeptide: UPF0232 protein MSMEG_0004/MSMEI_0006 (194 aa).

Residues 1–14 (MTGPFDDDGPEEDA) show a composition bias toward acidic residues. The interval 1 to 81 (MTGPFDDDGP…GPGPDARDPQ (81 aa)) is disordered. Over residues 30 to 52 (DLVRRTLEEARGAARSQGKDVGR) the composition is skewed to basic and acidic residues.

It belongs to the UPF0232 family.

The chain is UPF0232 protein MSMEG_0004/MSMEI_0006 from Mycolicibacterium smegmatis (strain ATCC 700084 / mc(2)155) (Mycobacterium smegmatis).